The following is a 453-amino-acid chain: Probable acetylornithine aminotransferase, mitochondrial (453 aa).

N6-(pyridoxal phosphate)lysine is present on lysine 302.

The protein belongs to the class-III pyridoxal-phosphate-dependent aminotransferase family. Pyridoxal 5'-phosphate is required as a cofactor.

It is found in the mitochondrion matrix. The catalysed reaction is N(2)-acetyl-L-ornithine + 2-oxoglutarate = N-acetyl-L-glutamate 5-semialdehyde + L-glutamate. It participates in amino-acid biosynthesis; L-arginine biosynthesis; N(2)-acetyl-L-ornithine from L-glutamate: step 4/4. The protein is Probable acetylornithine aminotransferase, mitochondrial (argD) of Dictyostelium discoideum (Social amoeba).